Consider the following 146-residue polypeptide: Hemoglobin subunit beta-1 (146 aa).

In terms of domain architecture, Globin spans 2–146 (EWTDAEKSTI…VVAAMGSRYF (145 aa)). Residues His-63 and His-92 each contribute to the heme b site.

It belongs to the globin family. Heterotetramer of two alpha chains and two beta chains. Red blood cells.

Its function is as follows. Involved in oxygen transport from gills to the various peripheral tissues. The chain is Hemoglobin subunit beta-1 (hbb1) from Oncorhynchus mykiss (Rainbow trout).